We begin with the raw amino-acid sequence, 1405 residues long: Sterol 3-beta-glucosyltransferase (1405 aa).

2 stretches are compositionally biased toward basic and acidic residues: residues 1 to 16 (MRPFLDDAKRRVDRKL) and 95 to 105 (TGQRPRKESSV). 3 disordered regions span residues 1–27 (MRPFLDDAKRRVDRKLSARRQSLSASR), 83–186 (ARFD…SATP), and 203–230 (DLKASSTERSQSSLNETGAKGPRDASVS). The span at 106-115 (RKGTSVSVNT) shows a compositional bias: polar residues. Low complexity predominate over residues 116 to 126 (SSLDPSQRSSS). Polar residues predominate over residues 206-218 (ASSTERSQSSLNE). Residues 246-285 (EKVLVEYACSLLQSMLLQGYMYVTEGHICFYAYLPKKSTV) enclose the GRAM 1 domain. The PH domain maps to 285–384 (VAIKSGYLHK…WVKALQKVIF (100 aa)). 2 disordered regions span residues 461–526 (SQHL…DSSD) and 566–642 (TIYG…SGAP). Over residues 483 to 493 (RWSLTSGTSRA) the composition is skewed to polar residues. The segment covering 570–589 (LDRRPSGRERRGRRNSDETA) has biased composition (basic and acidic residues). A compositionally biased stretch (polar residues) spans 590–603 (RSPSTRVNVGTGQQ). The segment covering 606-624 (ELDRRTDGNTSGREARDTT) has biased composition (basic and acidic residues). Positions 626–642 (ESDQYTQDPTKSFSGAP) are enriched in polar residues. The GRAM 2 domain maps to 724-790 (DRFRAHFALP…RDIENVEKEK (67 aa)). UDP-alpha-D-glucose contacts are provided by Ser-911, Arg-912, Asp-914, Ala-1214, His-1216, His-1229, Gly-1233, Thr-1234, Asp-1253, and Gln-1254. Positions 1330 to 1367 (SIASSTPFSPTPSAKTAAEQDADDDVEDSEEWTFVGDD) are disordered. A compositionally biased stretch (low complexity) spans 1332 to 1348 (ASSTPFSPTPSAKTAAE). Acidic residues predominate over residues 1349–1367 (QDADDDVEDSEEWTFVGDD).

Belongs to the glycosyltransferase 28 family.

Its subcellular location is the cytoplasm. The protein localises to the preautophagosomal structure membrane. It catalyses the reaction a sterol + UDP-alpha-D-glucose = a sterol 3-beta-D-glucoside + UDP + H(+). The catalysed reaction is ergosterol + UDP-alpha-D-glucose = ergosteryl 3-beta-D-glucoside + UDP + H(+). Sterol glycosyltransferase responsible for the glycosylation of ergosterol to form ergosterol-glucoside. This Aspergillus fumigatus (strain ATCC MYA-4609 / CBS 101355 / FGSC A1100 / Af293) (Neosartorya fumigata) protein is Sterol 3-beta-glucosyltransferase.